Consider the following 755-residue polypeptide: MAGCIPEEKTYRRFLELFLGEFRGPCGGGEPEPEPEPEPEPEPESEPEPEPELVEAEAAEASVEEPGEEAATVAATEEGDQEQDPEPEEEAAVEGEEEEEGAATAAAAPGHSAVPPPPPQLPPLPPLPRPLSERITREEVEGESLDLCLQQLYKYNCPSFLAAALARATSDEVLQSDLSAHYIPKETDGTEGTVEIETVKLARSVFSKLHEICCSWVKDFPLRRRPQLYYETSIHAIKNMRRKMEDKHVCIPDFNMLFNLEDQEEQAYFAVFDGHGGVDAAIYASIHLHVNLVRQEMFPHDPAEALCRAFRVTDERFVQKAARESLRCGTTGVVTFIRGNMLHVAWVGDSQVMLVRKGQAVELMKPHKPDREDEKQRIEALGGCVVWFGAWRVNGSLSVSRAIGDAEHKPYICGDADSASTVLDGTEDYLILACDGFYDTVNPDEAVKVVSDHLKENNGDSSMVAHKLVASARDAGSSDNITVIVVFLRDMNKAVNVSEESDWTENSFQGGQEDGGDDKENHGECKRPWPQHQCSAPADLGYDGRVDSFTDRTSLSPGSQINVLEDPGYLDLTQIEASKPHSAQFLLPVEMFGPGAPKKANLINELMMEKKSVQSSLPEWSGAGEFPTAFNLGSTGEQIYRMQSLSPVCSGLENEQFKSPGNRVSRLSHLRHHYSKKWHRFRFNPKFYSFLSAQEPSHKIGTSLSSLTGSGKRNRIRSSLPWRQNSWKGYSENMRKLRKTHDIPCPDLPWSYKIE.

A disordered region spans residues 21–131 (EFRGPCGGGE…PPLPPLPRPL (111 aa)). 7 tandem repeats follow at residues 31–32 (PE), 33–34 (PE), 35–36 (PE), 37–38 (PE), 39–40 (PE), 41–42 (PE), and 43–44 (PE). An 11 X 2 AA tandem repeats of P-E region spans residues 31 to 52 (PEPEPEPEPEPEPESEPEPEPE). Composition is skewed to acidic residues over residues 31 to 68 (PEPE…EPGE) and 77 to 101 (EEGD…EEEG). The 8; approximate repeat unit spans residues 45–46 (SE). 3 tandem repeats follow at residues 47–48 (PE), 49–50 (PE), and 51–52 (PE). A compositionally biased stretch (low complexity) spans 102 to 113 (AATAAAAPGHSA). The segment covering 114 to 129 (VPPPPPQLPPLPPLPR) has biased composition (pro residues). One can recognise a PPM-type phosphatase domain in the interval 231 to 488 (ETSIHAIKNM…DNITVIVVFL (258 aa)). 4 residues coordinate Mn(2+): D273, G274, D435, and D479. The tract at residues 498–537 (SEESDWTENSFQGGQEDGGDDKENHGECKRPWPQHQCSAP) is disordered. The span at 518–527 (DKENHGECKR) shows a compositional bias: basic and acidic residues. 2 positions are modified to phosphoserine: S535 and S548.

This sequence belongs to the PP2C family. Heterotrimer. Interacts with PAX1 and ARHGEF6 (or ARHGEF7). Requires Mg(2+) as cofactor. Mn(2+) serves as cofactor.

Its subcellular location is the nucleus. The protein localises to the cytoplasm. It carries out the reaction O-phospho-L-seryl-[protein] + H2O = L-seryl-[protein] + phosphate. It catalyses the reaction O-phospho-L-threonyl-[protein] + H2O = L-threonyl-[protein] + phosphate. Protein phosphatase that inactivates multifunctional CaM kinases such as CAMK4 and CAMK2. Dephosphorylates and inactivates PAK. May play a role in the inhibition of actin fiber stress breakdown and in morphological changes driven by TNK2/CDC42. Dephosphorylates PRKAA2. This is Protein phosphatase 1E (PPM1E) from Homo sapiens (Human).